The chain runs to 378 residues: D-alanine--D-alanine ligase (378 aa).

The ATP-grasp domain maps to 141-347; that stretch reads KKLLTLNGIR…YSELIDQLIQ (207 aa). 171 to 226 lines the ATP pocket; it reads AEELGETLFVKPARQGSSVGIHKVRNEEEYNAALEDGFKYDYKILVEEAIKNPREV. Mg(2+) contacts are provided by aspartate 301, glutamate 314, and asparagine 316.

Belongs to the D-alanine--D-alanine ligase family. Mg(2+) is required as a cofactor. Requires Mn(2+) as cofactor.

The protein localises to the cytoplasm. It catalyses the reaction 2 D-alanine + ATP = D-alanyl-D-alanine + ADP + phosphate + H(+). It functions in the pathway cell wall biogenesis; peptidoglycan biosynthesis. Cell wall formation. The sequence is that of D-alanine--D-alanine ligase from Ligilactobacillus salivarius (strain UCC118) (Lactobacillus salivarius).